The primary structure comprises 316 residues: tRNA selenocysteine 1-associated protein 1-like (316 aa).

2 RRM domains span residues 6–89 (TSLW…YATY) and 99–178 (FSVF…IAVN). Residues 239 to 248 (PPMGMPPMPP) show a composition bias toward pro residues. A disordered region spans residues 239–285 (PPMGMPPMPPDMQGSTEAHDGTEEVEEDPSEDPNPQVDVEELNRQYM).

It belongs to the RRM TRSPAP family.

The protein localises to the nucleus. Its subcellular location is the cytoplasm. Its function is as follows. Involved in the early steps of selenocysteine biosynthesis and tRNA(Sec) charging to the later steps resulting in the cotranslational incorporation of selenocysteine into selenoproteins. This Danio rerio (Zebrafish) protein is tRNA selenocysteine 1-associated protein 1-like (trnau1apl).